Reading from the N-terminus, the 825-residue chain is Glycerol-3-phosphate acyltransferase 1, mitochondrial (825 aa).

At 1 to 87 the chain is on the cytoplasmic side; that stretch reads MDESALTLGT…FFNPSIPSLG (87 aa). The tract at residues 80–120 is important for mitochondrial localization; sequence NPSIPSLGLRNVIYINETHTRHRGWLARRLSYVLFIQERDV. An intramembrane segment occupies 88–118; sequence LRNVIYINETHTRHRGWLARRLSYVLFIQER. Residues 119 to 825 lie on the Cytoplasmic side of the membrane; the sequence is DVHKGMFATN…LEYILSLVVL (707 aa). The HXXXXD motif signature appears at 230–235; that stretch reads HRSHID. 5 residues coordinate CoA: Arg278, Arg279, Lys288, Arg293, and Arg328. Residue Ser380 is modified to Phosphoserine. The interval 435–455 is disordered; it reads SRPSGAADEGTDMSINESRNA. Residue Arg461 participates in CoA binding. Residues Ser685 and Ser692 each carry the phosphoserine modification. 2 positions are modified to N6-acetyllysine: Lys777 and Lys781.

The protein belongs to the GPAT/DAPAT family. Highly expressed in adipose tissues and lung. Low expression in liver.

Its subcellular location is the mitochondrion outer membrane. The catalysed reaction is sn-glycerol 3-phosphate + an acyl-CoA = a 1-acyl-sn-glycero-3-phosphate + CoA. It catalyses the reaction (9Z,12Z)-octadecadienoyl-CoA + sn-glycerol 3-phosphate = 1-(9Z,12Z)-octadecadienoyl-sn-glycero-3-phosphate + CoA. The enzyme catalyses sn-glycerol 3-phosphate + (9Z)-octadecenoyl-CoA = 1-(9Z-octadecenoyl)-sn-glycero-3-phosphate + CoA. It carries out the reaction sn-glycerol 3-phosphate + octadecanoyl-CoA = 1-octadecanoyl-sn-glycero-3-phosphate + CoA. The catalysed reaction is sn-glycerol 3-phosphate + hexadecanoyl-CoA = 1-hexadecanoyl-sn-glycero-3-phosphate + CoA. It catalyses the reaction dodecanoyl-CoA + sn-glycerol 3-phosphate = 1-dodecanoyl-sn-glycerol 3-phosphate + CoA. The enzyme catalyses 1-acyl-sn-glycero-3-phospho-(1'-sn-glycerol) + an acyl-CoA = a 1,2-diacyl-sn-glycero-3-phospho-(1'-sn-glycerol) + CoA. The protein operates within phospholipid metabolism; CDP-diacylglycerol biosynthesis; CDP-diacylglycerol from sn-glycerol 3-phosphate: step 1/3. Its function is as follows. Mitochondrial membrane protein that catalyzes the essential first step of biosynthesis of glycerolipids such as triglycerides, phosphatidic acids and lysophosphatidic acids. Esterifies acyl-group from acyl-coenzyme A (acyl-CoA) to the sn-1 position of glycerol-3-phosphate, to produce lysophosphatidic acid. Has a narrow hydrophobic binding cleft that selects for a linear acyl chain. Catalytic activity is higher for substrates with a 16-carbon acyl chain. The sequence is that of Glycerol-3-phosphate acyltransferase 1, mitochondrial from Bos taurus (Bovine).